The sequence spans 330 residues: Ketol-acid reductoisomerase (NADP(+)) (330 aa).

The 181-residue stretch at 1 to 181 folds into the KARI N-terminal Rossmann domain; the sequence is MNAYYEQDAD…GGTKAGVIET (181 aa). NADP(+)-binding positions include 24–27, Arg-47, Ser-50, Ser-52, and 82–85; these read FGSQ and DQYQ. His-107 is an active-site residue. Gly-133 is an NADP(+) binding site. Residues 182–327 form the KARI C-terminal knotted domain; sequence TFKNETETDL…AKLRDMMSWL (146 aa). Mg(2+)-binding residues include Asp-190, Glu-194, Glu-226, and Glu-230. Substrate is bound at residue Ser-251.

This sequence belongs to the ketol-acid reductoisomerase family. Mg(2+) serves as cofactor.

The catalysed reaction is (2R)-2,3-dihydroxy-3-methylbutanoate + NADP(+) = (2S)-2-acetolactate + NADPH + H(+). The enzyme catalyses (2R,3R)-2,3-dihydroxy-3-methylpentanoate + NADP(+) = (S)-2-ethyl-2-hydroxy-3-oxobutanoate + NADPH + H(+). The protein operates within amino-acid biosynthesis; L-isoleucine biosynthesis; L-isoleucine from 2-oxobutanoate: step 2/4. It participates in amino-acid biosynthesis; L-valine biosynthesis; L-valine from pyruvate: step 2/4. Functionally, involved in the biosynthesis of branched-chain amino acids (BCAA). Catalyzes an alkyl-migration followed by a ketol-acid reduction of (S)-2-acetolactate (S2AL) to yield (R)-2,3-dihydroxy-isovalerate. In the isomerase reaction, S2AL is rearranged via a Mg-dependent methyl migration to produce 3-hydroxy-3-methyl-2-ketobutyrate (HMKB). In the reductase reaction, this 2-ketoacid undergoes a metal-dependent reduction by NADPH to yield (R)-2,3-dihydroxy-isovalerate. The polypeptide is Ketol-acid reductoisomerase (NADP(+)) (Chlorobium phaeobacteroides (strain BS1)).